The chain runs to 944 residues: Valine--tRNA ligase (944 aa).

The 'HIGH' region motif lies at 43–53; sequence PNVTGTLHMGH. The short motif at 550 to 554 is the 'KMSKS' region element; that stretch reads KMSKS. Lys-553 lines the ATP pocket. Residues 878–944 adopt a coiled-coil conformation; it reads LVDMDAERTR…TGLREQRAKL (67 aa).

Belongs to the class-I aminoacyl-tRNA synthetase family. ValS type 1 subfamily. In terms of assembly, monomer.

The protein localises to the cytoplasm. The catalysed reaction is tRNA(Val) + L-valine + ATP = L-valyl-tRNA(Val) + AMP + diphosphate. In terms of biological role, catalyzes the attachment of valine to tRNA(Val). As ValRS can inadvertently accommodate and process structurally similar amino acids such as threonine, to avoid such errors, it has a 'posttransfer' editing activity that hydrolyzes mischarged Thr-tRNA(Val) in a tRNA-dependent manner. The polypeptide is Valine--tRNA ligase (Xanthomonas campestris pv. campestris (strain B100)).